A 167-amino-acid chain; its full sequence is Calcium-binding protein CML19 (167 aa).

4 EF-hand domains span residues glutamine 23–glutamate 58, methionine 59–glutamate 94, aspartate 96–asparagine 131, and phenylalanine 132–glycine 167. The Ca(2+) site is built by aspartate 36, aspartate 38, serine 40, serine 42, glutamate 47, aspartate 72, asparagine 74, serine 76, glutamate 83, aspartate 109, aspartate 111, asparagine 113, lysine 115, aspartate 120, aspartate 145, aspartate 147, aspartate 149, glutamate 151, and glutamate 156.

Belongs to the centrin family. Interacts with RAD4. Calcium is required for this interaction. Interacts with SAC3B. As to expression, expressed in leaves, roots, and at lower level in stems. Barely detectable in flower buds and flowers.

It is found in the cytoplasm. The protein localises to the nucleus. Potential calcium sensor that binds calcium in vitro. Modulates homologous recombination and nucleotide excision repair (NER). Involved in the early response to UV irradiation. The polypeptide is Calcium-binding protein CML19 (Arabidopsis thaliana (Mouse-ear cress)).